A 747-amino-acid polypeptide reads, in one-letter code: RNA polymerase II assembly factor rtp1 (747 aa).

HEAT repeat units follow at residues 37–75 (NYFLNLLEEISKLDTDQPLSVTSLRCLQLFVHLTFLLGV), 103–141 (QIYNILLPLLLTPSLLQGPLNLHYADLLLLHLYLLNCHE), 320–358 (DIIRICESCVPSLLHLQENTTLRSKVQDILLRIISVCGT), 381–418 (SQLAMFLPNLLEIWVQQPPDKRLELLELVQYALSNVDS), 459–485 (EENEEILLVLLNIISSVIGRNAELDLE), 486–523 (NPISSLLPALEQLSNYSNREISDLAKDVYKTLIQSKDD), and 557–594 (INPVRVLHVLINLLRDENSYVHLNVISAVVSLCDKYDD).

This sequence belongs to the Tango6 family. In terms of assembly, interacts with RNA polymerase II subunits. Interacts with nuclear pore complex subunits.

The protein resides in the cytoplasm. It is found in the nucleus. Required for the cytoplasmic assembly and the nuclear import of RNA polymerase II. The chain is RNA polymerase II assembly factor rtp1 from Schizosaccharomyces pombe (strain 972 / ATCC 24843) (Fission yeast).